The chain runs to 206 residues: Protein GrpE (206 aa).

This sequence belongs to the GrpE family. Homodimer.

The protein localises to the cytoplasm. Functionally, participates actively in the response to hyperosmotic and heat shock by preventing the aggregation of stress-denatured proteins, in association with DnaK and GrpE. It is the nucleotide exchange factor for DnaK and may function as a thermosensor. Unfolded proteins bind initially to DnaJ; upon interaction with the DnaJ-bound protein, DnaK hydrolyzes its bound ATP, resulting in the formation of a stable complex. GrpE releases ADP from DnaK; ATP binding to DnaK triggers the release of the substrate protein, thus completing the reaction cycle. Several rounds of ATP-dependent interactions between DnaJ, DnaK and GrpE are required for fully efficient folding. The polypeptide is Protein GrpE (Shewanella sp. (strain W3-18-1)).